The chain runs to 217 residues: E3 ubiquitin-protein ligase znrf2 (217 aa).

Disordered stretches follow at residues Met-1–Ala-27 and Gln-63–Thr-111. Residue Gly-2 is the site of N-myristoyl glycine attachment. Over residues Arg-68 to Pro-100 the composition is skewed to polar residues. The RING-type; atypical zinc-finger motif lies at Cys-174–Pro-215.

It localises to the endosome membrane. It is found in the lysosome membrane. The protein localises to the presynaptic cell membrane. The enzyme catalyses S-ubiquitinyl-[E2 ubiquitin-conjugating enzyme]-L-cysteine + [acceptor protein]-L-lysine = [E2 ubiquitin-conjugating enzyme]-L-cysteine + N(6)-ubiquitinyl-[acceptor protein]-L-lysine.. It participates in protein modification; protein ubiquitination. May play a role in the establishment and maintenance of neuronal transmission and plasticity via its ubiquitin ligase activity. E3 ubiquitin ligases accept ubiquitin from an E2 ubiquitin-conjugating enzyme in the form of a thioester and then directly transfer the ubiquitin to targeted substrates. This is E3 ubiquitin-protein ligase znrf2 (znrf2) from Danio rerio (Zebrafish).